We begin with the raw amino-acid sequence, 483 residues long: MSIRVTQKSYKVSTSGPRAFSSRSYTSGPGSRISSSSFSRVGSSNFRGGLGGGYGGASGMGGITAVTVNQSLLSPLVLEVDPNIQAVRTQEKEQIKTLNNKFASFIDKVRFLEQQNKMLETKWSLLQQQKTARSNMDNMFESYINNLRRQLETLGQEKLKLEAELGNMQGLVEDFKNKYEDEINKRTEMENEFVLIKKDVDEAYMNKVELESRLEGLTDEINFLRQLYEEEIRELQSQISDTSVVLSMDNSRSLDMDSIIAEVKAQYEDIANRSRAEAESMYQIKYEELQSLAGKHGDDLRRTKTEISEMNRNISRLQAEIEGLKGQRASLEAAIADAEQRGELAIKDANAKLSELEAALQRAKQDMARQLREYQELMNVKLALDIEIATYRKLLEGEESRLESGMQNMSIHTKTTSGYAGGLSSAYGGLTSPGLSYSLGSSFGSGAGSSSFSRTSSSRAVVVKKIETRDGKLVSESSDVLPK.

Residues 1 to 16 (MSIRVTQKSYKVSTSG) are compositionally biased toward polar residues. The disordered stretch occupies residues 1 to 41 (MSIRVTQKSYKVSTSGPRAFSSRSYTSGPGSRISSSSFSRV). The interval 1–90 (MSIRVTQKSY…DPNIQAVRTQ (90 aa)) is head. Serine 9 bears the Phosphoserine; by PKC/PRKCE mark. A Glycyl lysine isopeptide (Lys-Gly) (interchain with G-Cter in SUMO2) cross-link involves residue lysine 11. Serine 13, serine 15, serine 21, and serine 22 each carry phosphoserine. Position 23 is an omega-N-methylarginine (arginine 23). Position 24 is a phosphoserine; by PKC/PRKCE (serine 24). The span at 24 to 41 (SYTSGPGSRISSSSFSRV) shows a compositional bias: low complexity. Threonine 26 carries the post-translational modification Phosphothreonine. Residues serine 27 and serine 31 each carry the phosphoserine modification. The residue at position 32 (arginine 32) is an Omega-N-methylarginine. Phosphoserine occurs at positions 34, 37, and 39. Position 40 is an omega-N-methylarginine (arginine 40). A phosphoserine mark is found at serine 43 and serine 44. An Asymmetric dimethylarginine; alternate modification is found at arginine 47. Position 47 is an omega-N-methylarginine; alternate (arginine 47). The residue at position 74 (serine 74) is a Phosphoserine; by MAPK. The interval 91–126 (EKEQIKTLNNKFASFIDKVRFLEQQNKMLETKWSLL) is coil 1A. Residues 91–402 (EKEQIKTLNN…KLLEGEESRL (312 aa)) enclose the IF rod domain. Lysine 101 is modified (N6-malonyllysine). Residues lysine 122 and lysine 130 each participate in a glycyl lysine isopeptide (Lys-Gly) (interchain with G-Cter in SUMO2) cross-link. The linker 1 stretch occupies residues 127–143 (QQQKTARSNMDNMFESY). Positions 144 to 235 (INNLRRQLET…QLYEEEIREL (92 aa)) are coil 1B. Residue lysine 197 forms a Glycyl lysine isopeptide (Lys-Gly) (interchain with G-Cter in SUMO1); alternate linkage. Lysine 197 participates in a covalent cross-link: Glycyl lysine isopeptide (Lys-Gly) (interchain with G-Cter in SUMO2); alternate. The residue at position 207 (lysine 207) is an N6-acetyllysine. Position 228 is a phosphotyrosine (tyrosine 228). The segment at 236–259 (QSQISDTSVVLSMDNSRSLDMDSI) is linker 12. 2 positions are modified to phosphoserine: serine 253 and serine 258. A coil 2 region spans residues 260–398 (IAEVKAQYED…ATYRKLLEGE (139 aa)). A necessary for interaction with PNN region spans residues 261 to 382 (AEVKAQYEDI…EYQELMNVKL (122 aa)). Lysine 264 participates in a covalent cross-link: Glycyl lysine isopeptide (Lys-Gly) (interchain with G-Cter in SUMO2). Serine 274 is subject to Phosphoserine. A Glycyl lysine isopeptide (Lys-Gly) (interchain with G-Cter in SUMO2) cross-link involves residue lysine 285. The residue at position 291 (serine 291) is a Phosphoserine. Residue lysine 295 forms a Glycyl lysine isopeptide (Lys-Gly) (interchain with G-Cter in SUMO2); alternate linkage. Lysine 295 carries the post-translational modification N6-acetyllysine; alternate. Residue lysine 304 forms a Glycyl lysine isopeptide (Lys-Gly) (interchain with G-Cter in SUMO2) linkage. Residue lysine 325 forms a Glycyl lysine isopeptide (Lys-Gly) (interchain with G-Cter in SUMO2); alternate linkage. Lysine 325 carries the N6-acetyllysine; alternate modification. Serine 330 carries the post-translational modification Phosphoserine. Lysine 393 is covalently cross-linked (Glycyl lysine isopeptide (Lys-Gly) (interchain with G-Cter in SUMO2)). Residues 399 to 483 (ESRLESGMQN…VSESSDVLPK (85 aa)) form a tail region. Residues serine 400, serine 404, serine 410, serine 417, and serine 424 each carry the phosphoserine modification. Residue serine 432 is modified to Phosphoserine; by CaMK2 and MAPK. Lysine 472 participates in a covalent cross-link: Glycyl lysine isopeptide (Lys-Gly) (interchain with G-Cter in SUMO1); alternate. Lysine 472 is covalently cross-linked (Glycyl lysine isopeptide (Lys-Gly) (interchain with G-Cter in SUMO2); alternate). 3 positions are modified to phosphoserine: serine 475, serine 477, and serine 478.

This sequence belongs to the intermediate filament family. As to quaternary structure, heterotetramer of two type I and two type II keratins. Forms a heterodimer with KRT18. Associates with KRT20. Interacts with PLEC isoform 1C, when in a heterodimer with KRT18. Interacts with PNN. When associated with KRT19, interacts with DMD. Interacts with TCHP. Interacts with APEX1. Interacts with GPER1. Interacts with EPPK1. Interacts with PKP1 and PKP2. In terms of assembly, (Microbial infection) Interacts with hepatitis C virus/HCV core protein. Phosphorylation on serine residues is enhanced during EGF stimulation and mitosis. Ser-74 phosphorylation plays an important role in keratin filament reorganization. Post-translationally, O-glycosylated. O-GlcNAcylation at multiple sites increases solubility, and decreases stability by inducing proteasomal degradation. In terms of processing, O-glycosylated (O-GlcNAcylated), in a cell cycle-dependent manner. In terms of tissue distribution, observed in muscle fibers accumulating in the costameres of myoplasm at the sarcolemma membrane in structures that contain dystrophin and spectrin. Expressed in gingival mucosa and hard palate of the oral cavity.

It is found in the cytoplasm. The protein localises to the nucleus. It localises to the nucleoplasm. Its subcellular location is the nucleus matrix. In terms of biological role, together with KRT19, helps to link the contractile apparatus to dystrophin at the costameres of striated muscle. This chain is Keratin, type II cytoskeletal 8 (KRT8), found in Homo sapiens (Human).